The sequence spans 451 residues: DNA polymerase delta subunit 3 (451 aa).

Disordered regions lie at residues 187-241 (SQAK…AASS), 259-386 (KQTP…KVLR), and 404-451 (AWES…FAKK). The segment covering 200 to 216 (PSTSQVKEAPKASQTVE) has biased composition (polar residues). Positions 225 to 241 (SAPAKKGSSAPKSAASS) are enriched in low complexity. The segment covering 306–316 (QREEELRRMME) has biased composition (basic and acidic residues). The segment covering 329–353 (EEEEEEEEEEESEHEQLPAEEEPMA) has biased composition (acidic residues). Basic and acidic residues predominate over residues 354–366 (EEPKAPEPVKEEP). Residues 376–386 (GRRRGKRKVLR) show a composition bias toward basic residues. Positions 441–448 (QGSIMSWF) match the PIP-box motif.

As to quaternary structure, component of the DNA polymerase delta complex which consists of PolD1, PolD2, PolD3 and PolD4, with PolD1 bearing DNA polymerase and 3' to 5' proofreading exonuclease activities. Directly interacts with PCNA.

It is found in the nucleus. Accessory component of the DNA polymerase delta complex. The complex is required for the maintenance of genome integrity, acting in concert with the sliding clamp processivity factor PCNA. This Chaetomium thermophilum (strain DSM 1495 / CBS 144.50 / IMI 039719) (Thermochaetoides thermophila) protein is DNA polymerase delta subunit 3.